The chain runs to 339 residues: Serine/threonine-protein kinase pdik1l-B (339 aa).

A Protein kinase domain is found at 8-332; sequence YDLIREVGRG…LELKLIQIAF (325 aa). ATP-binding positions include 14-22 and Lys37; that span reads VGRGSYGLV. Catalysis depends on Asp164, which acts as the Proton acceptor.

Belongs to the protein kinase superfamily. Ser/Thr protein kinase family.

It is found in the nucleus. It catalyses the reaction L-seryl-[protein] + ATP = O-phospho-L-seryl-[protein] + ADP + H(+). It carries out the reaction L-threonyl-[protein] + ATP = O-phospho-L-threonyl-[protein] + ADP + H(+). The protein is Serine/threonine-protein kinase pdik1l-B (pdik1-b) of Xenopus laevis (African clawed frog).